Consider the following 710-residue polypeptide: Polyribonucleotide nucleotidyltransferase (710 aa).

Mg(2+) contacts are provided by D487 and D493. One can recognise a KH domain in the interval 554–613; it reads PRIHTMKISAEKIKDVIGKGGAVIRALTEETGTTIEIEDDGTIKIAATEGAAAKEAIRRI. The 69-residue stretch at 623-691 folds into the S1 motif domain; the sequence is GRIYTGKVAR…RQGRVRLSMK (69 aa). The interval 691 to 710 is disordered; that stretch reads KEAVEKPAEEANDASEAKGE.

The protein belongs to the polyribonucleotide nucleotidyltransferase family. As to quaternary structure, component of the RNA degradosome, which is a multiprotein complex involved in RNA processing and mRNA degradation. It depends on Mg(2+) as a cofactor.

Its subcellular location is the cytoplasm. It carries out the reaction RNA(n+1) + phosphate = RNA(n) + a ribonucleoside 5'-diphosphate. Involved in mRNA degradation. Catalyzes the phosphorolysis of single-stranded polyribonucleotides processively in the 3'- to 5'-direction. This chain is Polyribonucleotide nucleotidyltransferase, found in Vibrio campbellii (strain ATCC BAA-1116).